The following is a 152-amino-acid chain: Homeobox protein ceh-63 (152 aa).

The span at Asn21–Lys30 shows a compositional bias: polar residues. 2 disordered regions span residues Asn21–Phe48 and Arg92–Val126. Basic residues predominate over residues Pro35–Lys44. A DNA-binding region (homeobox) is located at residues Arg41 to Thr100. The segment covering Pro116 to Val126 has biased composition (polar residues).

In terms of assembly, may interact with homeobox protein ceh-14.

The protein resides in the nucleus. In terms of biological role, probable transcription factor, modulating expression of helix-loop-helix protein mbr-1, perhaps acting in concert with homeobox protein ceh-14. May play a minor role in axon guidance in the DVC interneuron. This is Homeobox protein ceh-63 from Caenorhabditis elegans.